The following is a 294-amino-acid chain: Protein C3orf33 (294 aa).

An N-acetylalanine modification is found at Ala2. Residues 40 to 56 form a helical membrane-spanning segment; it reads ISTGMAIAGIMLLLRSI.

In terms of tissue distribution, highly expressed in ileocecal tissue and endometrium.

Its subcellular location is the membrane. The protein resides in the secreted. Secreted protein may play a role in transcription regulation via the MAPK3/MAPK1 pathway through an unidentified receptor on the plasma membrane. This chain is Protein C3orf33 (C3orf33), found in Homo sapiens (Human).